We begin with the raw amino-acid sequence, 37 residues long: U1-theraphotoxin-Hs1b (37 aa).

Cystine bridges form between C4–C18, C8–C29, and C23–C34.

As to quaternary structure, form 1 and form 2 may dimerize. In terms of tissue distribution, expressed by the venom gland.

It localises to the secreted. Lethal neurotoxin that blocks neuromuscular transmission. Acts cooperatively to potentiate the activity of huwentoxin-I. The polypeptide is U1-theraphotoxin-Hs1b (Cyriopagopus schmidti (Chinese bird spider)).